The sequence spans 760 residues: Probable ubiquitin carboxyl-terminal hydrolase creB (760 aa).

A disordered region spans residues 1 to 28 (MGSFLRSFRNNAGSTTPSVGAVPAKKEV). Residues 8-18 (FRNNAGSTTPS) show a composition bias toward polar residues. One can recognise a USP domain in the interval 55-469 (YGMENYGNTC…CAYVLFYQET (415 aa)). The active-site Nucleophile is the cysteine 64. Disordered stretches follow at residues 114-146 (AEAQ…DSPD) and 242-270 (PAAI…KTPN). Over residues 258 to 270 (VDQSASSGSKTPN) the composition is skewed to polar residues. Histidine 420 functions as the Proton acceptor in the catalytic mechanism. Residues 520–760 (EEHNRPNGLK…LRKKSFSILS (241 aa)) form a disordered region. A coiled-coil region spans residues 575–635 (KSDVQGKKER…AALEASKASK (61 aa)). 3 stretches are compositionally biased toward basic and acidic residues: residues 578-626 (VQGK…ELKA), 635-651 (KAQE…KDKL), and 708-742 (DPKD…ERTG). Residues 743 to 760 (HGKWRSFSLRKKSFSILS) show a composition bias toward basic residues.

It belongs to the peptidase C19 family. In terms of assembly, interacts with creA, creC and qutD.

The catalysed reaction is Thiol-dependent hydrolysis of ester, thioester, amide, peptide and isopeptide bonds formed by the C-terminal Gly of ubiquitin (a 76-residue protein attached to proteins as an intracellular targeting signal).. Ubiquitin thioesterase component of the regulatory network controlling carbon source utilization through ubiquitination and deubiquitination involving creA, creB, creC, creD and acrB. Deubiquitinates the creA catabolic repressor and the quinate permease qutD. Also plays a role in response to carbon starvation and the control of extracellular proteases activity. The chain is Probable ubiquitin carboxyl-terminal hydrolase creB (creB) from Aspergillus clavatus (strain ATCC 1007 / CBS 513.65 / DSM 816 / NCTC 3887 / NRRL 1 / QM 1276 / 107).